Reading from the N-terminus, the 436-residue chain is mRNA cap guanine-N(7) methyltransferase (436 aa).

Positions 1–50 (MSTKPEKPIWMSQEDYDRQYGSITGDESSTVSKKDSKVTANAPGDGNGSL) are disordered. Positions 141-424 (SPIIKLRNFN…FYTMFAFRKV (284 aa)) constitute an mRNA cap 0 methyltransferase domain. 150–151 (NN) provides a ligand contact to mRNA. S-adenosyl-L-methionine is bound by residues K154, G172, D194, D223, Q249, and Y254.

Belongs to the class I-like SAM-binding methyltransferase superfamily. mRNA cap 0 methyltransferase family.

The protein resides in the nucleus. It carries out the reaction a 5'-end (5'-triphosphoguanosine)-ribonucleoside in mRNA + S-adenosyl-L-methionine = a 5'-end (N(7)-methyl 5'-triphosphoguanosine)-ribonucleoside in mRNA + S-adenosyl-L-homocysteine. Responsible for methylating the 5'-cap structure of mRNAs. The sequence is that of mRNA cap guanine-N(7) methyltransferase (ABD1) from Saccharomyces cerevisiae (strain ATCC 204508 / S288c) (Baker's yeast).